A 399-amino-acid chain; its full sequence is Protein translocase subunit SecD (399 aa).

6 consecutive transmembrane segments (helical) span residues 7–27 (IKTAFIVIILGIAIWILLTFP), 239–259 (VIGAILVVLFMILVFRFLGLV), 262–282 (IALLIYVVLDLAALKLLNATL), 286–306 (GVAGIILSIGMAVDANCLIFA), 329–351 (ALRAIIDSNVTTILAALILFYFG), and 357–381 (GFAVTLSLGVALSMFTQITITRTLL).

This sequence belongs to the SecD/SecF family. SecD subfamily. Forms a complex with SecF. Part of the essential Sec protein translocation apparatus which comprises SecA, SecYEG and auxiliary proteins SecDF. Other proteins may also be involved.

The protein localises to the cell inner membrane. In terms of biological role, part of the Sec protein translocase complex. Interacts with the SecYEG preprotein conducting channel. SecDF uses the proton motive force (PMF) to complete protein translocation after the ATP-dependent function of SecA. This chain is Protein translocase subunit SecD, found in Dictyoglomus turgidum (strain DSM 6724 / Z-1310).